A 292-amino-acid chain; its full sequence is Elongation factor Ts (292 aa).

The tract at residues 79–82 is involved in Mg(2+) ion dislocation from EF-Tu; sequence TDFV.

It belongs to the EF-Ts family.

It localises to the cytoplasm. In terms of biological role, associates with the EF-Tu.GDP complex and induces the exchange of GDP to GTP. It remains bound to the aminoacyl-tRNA.EF-Tu.GTP complex up to the GTP hydrolysis stage on the ribosome. This chain is Elongation factor Ts, found in Xylella fastidiosa (strain Temecula1 / ATCC 700964).